The following is a 147-amino-acid chain: Catabolic 3-dehydroquinase 2 (147 aa).

Y23 (proton acceptor) is an active-site residue. Residues N74, H80, and D87 each coordinate substrate. H100 acts as the Proton donor in catalysis. Residues 101–102 (IT) and R111 each bind substrate.

This sequence belongs to the type-II 3-dehydroquinase family. In terms of assembly, homododecamer. Adopts a ring-like structure, composed of an arrangement of two hexameric rings stacked on top of one another.

It carries out the reaction 3-dehydroquinate = 3-dehydroshikimate + H2O. It functions in the pathway aromatic compound metabolism; 3,4-dihydroxybenzoate biosynthesis; 3,4-dihydroxybenzoate from 3-dehydroquinate: step 1/2. Functionally, is involved in the catabolism of quinate. Allows the utilization of quinate as carbon source via the beta-ketoadipate pathway. The protein is Catabolic 3-dehydroquinase 2 of Aspergillus terreus (strain NIH 2624 / FGSC A1156).